Reading from the N-terminus, the 1072-residue chain is E3 ubiquitin-protein ligase RNF31 (1072 aa).

The interval 1–485 (MPGEEEERAF…PEKQRQDKMR (485 aa)) is polyubiquitin-binding. Positions 71–142 (TLSTALNILE…SFPEGQEEPD (72 aa)) constitute a PUB domain. Residues 263-290 (QGTHLSPSLPASAQPRPQSTSLLALGDS) form a disordered region. The segment covering 265 to 280 (THLSPSLPASAQPRPQ) has biased composition (polar residues). Low complexity predominate over residues 281–290 (STSLLALGDS). 2 RanBP2-type zinc fingers span residues 299–329 (SAHLPWHCAACAMLNEPWAVLCVACDRPRGC) and 350–379 (ARGRWACQSCTFENEAAAVLCSICERPRLA). Serine 383 carries the post-translational modification Phosphoserine. The segment at 409–438 (QSQVWYCIHCTFCNSSPGWVCVMCNRTSSP) adopts a RanBP2-type 3 zinc-finger fold. The interval 443 to 484 (HAPRPYASSLEKGPPKPGPPRRLSAPLPSSCGDPEKQRQDKM) is disordered. A compositionally biased stretch (low complexity) spans 463–472 (RRLSAPLPSS). Phosphoserine is present on serine 466. Basic and acidic residues predominate over residues 475-484 (DPEKQRQDKM). The tract at residues 563-616 (GNLDEAVEECVRTRRRKVQELQSLGFGPEEGSLQALFQHGGDVSRALTELQRQR) is interaction with RBCK1. Residues 564–615 (NLDEAVEECVRTRRRKVQELQSLGFGPEEGSLQALFQHGGDVSRALTELQRQ) enclose the UBA domain. Positions 695-929 (LAQECAVCGW…KSLHGHHPRD (235 aa)) are TRIAD supradomain. Zn(2+) is bound by residues cysteine 699, cysteine 702, cysteine 717, cysteine 719, cysteine 722, and cysteine 725. The RING-type 1 zinc-finger motif lies at 699–749 (CAVCGWALPHNRMQALTSCECTICPDCFRQHFTIALKEKHITDMVCPACGR). Residue lysine 735 forms a (Microbial infection) Glycyl lysine isopeptide (Lys-Gly) (interchain with G-Cter in ubiquitin) linkage. Zn(2+)-binding residues include cysteine 744 and cysteine 747. Residues 779 to 841 (ALFHKKLTEG…WEEQHRGRSC (63 aa)) form an IBR-type zinc finger. Lysine 783 is covalently cross-linked ((Microbial infection) Glycyl lysine isopeptide (Lys-Gly) (interchain with G-Cter in ubiquitin)). Zn(2+) contacts are provided by cysteine 799, cysteine 802, cysteine 817, cysteine 820, cysteine 825, cysteine 828, histidine 836, cysteine 841, cysteine 871, and cysteine 874. Residues 871 to 901 (CPKCKFSYALARGGCMHFHCTQCRHQFCSGC) form an RING-type 2; atypical zinc finger. Residue lysine 875 forms a (Microbial infection) Glycyl lysine isopeptide (Lys-Gly) (interchain with G-Cter in ubiquitin) linkage. Cysteine 885 is an active-site residue. Positions 890, 893, 898, 901, 916, and 925 each coordinate Zn(2+). The segment at 910 to 1072 (KCPEPNCRVK…LGQSIPRRRK (163 aa)) is LDD domain.

This sequence belongs to the RBR family. As to quaternary structure, component of the LUBAC complex (linear ubiquitin chain assembly complex) which consists of SHARPIN, RBCK1 and RNF31. LUBAC has a MW of approximately 600 kDa suggesting a heteromultimeric assembly of its subunits. Associates with the TNF-R1 signaling complex (TNF-RSC) in a stimulation-dependent manner. Interacts (via the PUB domain) with OTULIN (via the PIM motif); the interaction is direct. Interacts (via the PUB domain) with VCP (via the PIM motif). Interacts (via the PUB domain) with SPATA2 (via the PIM motif); interaction is direct and bridges RNF31 and CYLD. Interacts with CYLD; the interaction is indirect and is mediated via SPATA2. Interacts with MUSK. Interacts with CARD11, promoting linear ubiquitination of BCL10. In terms of assembly, (Microbial infection) Interacts with S.flexneri E3 ubiquitin-protein ligases IpaH1.4 and IpaH2.5, leading to its ubiquitination. Autoubiquitinated. Interaction with OTULIN is required to suppress formation of 'Met-1'-linked polyubiquitin chains and prevent subsequent inactivation of the LUBAC complex. Post-translationally, cleaved by caspase during apoptosis. In terms of processing, (Microbial infection) Ubiquitinated by S.flexneri E3 ubiquitin-protein ligases IpaH1.4 and IpaH2.5, leading to its degradation by the proteasome, thereby preventing formation of the bacterial ubiquitin coat and activation of innate immunity. Expressed in both normal and transformed breast epithelial cell lines.

The protein localises to the cytoplasm. The catalysed reaction is [E2 ubiquitin-conjugating enzyme]-S-ubiquitinyl-L-cysteine + [acceptor protein]-L-lysine = [E2 ubiquitin-conjugating enzyme]-L-cysteine + [acceptor protein]-N(6)-ubiquitinyl-L-lysine.. It functions in the pathway protein modification; protein ubiquitination. Functionally, E3 ubiquitin-protein ligase component of the LUBAC complex which conjugates linear ('Met-1'-linked) polyubiquitin chains to substrates and plays a key role in NF-kappa-B activation and regulation of inflammation. LUBAC conjugates linear polyubiquitin to IKBKG and RIPK1 and is involved in activation of the canonical NF-kappa-B and the JNK signaling pathways. Linear ubiquitination mediated by the LUBAC complex interferes with TNF-induced cell death and thereby prevents inflammation. LUBAC is recruited to the TNF-R1 signaling complex (TNF-RSC) following polyubiquitination of TNF-RSC components by BIRC2 and/or BIRC3 and to conjugate linear polyubiquitin to IKBKG and possibly other components contributing to the stability of the complex. The LUBAC complex is also involved in innate immunity by conjugating linear polyubiquitin chains at the surface of bacteria invading the cytosol to form the ubiquitin coat surrounding bacteria. LUBAC is not able to initiate formation of the bacterial ubiquitin coat, and can only promote formation of linear polyubiquitins on pre-existing ubiquitin. Recruited to the surface of bacteria by RNF213, which initiates the bacterial ubiquitin coat. The bacterial ubiquitin coat acts as an 'eat-me' signal for xenophagy and promotes NF-kappa-B activation. Together with OTULIN, the LUBAC complex regulates the canonical Wnt signaling during angiogenesis. RNF31 is required for linear ubiquitination of BCL10, thereby promoting TCR-induced NF-kappa-B activation. Binds polyubiquitin of different linkage types. The protein is E3 ubiquitin-protein ligase RNF31 of Homo sapiens (Human).